The primary structure comprises 320 residues: Protoheme IX farnesyltransferase (320 aa).

The tract at residues 1–24 (MSMITERPVSDPAGQSVSATGDGA) is disordered. 8 helical membrane-spanning segments follow: residues 33–55 (AVVA…VTTV), 68–88 (LWLM…ASVL), 117–137 (NALI…AVFT), 140–160 (LAAG…TAWL), 183–203 (WAAV…VVFF), 241–261 (ILVF…LGAG), 262–282 (MGPI…VEAH), and 300–320 (FHWS…DALI).

This sequence belongs to the UbiA prenyltransferase family. Protoheme IX farnesyltransferase subfamily.

It localises to the cell membrane. It carries out the reaction heme b + (2E,6E)-farnesyl diphosphate + H2O = Fe(II)-heme o + diphosphate. Its pathway is porphyrin-containing compound metabolism; heme O biosynthesis; heme O from protoheme: step 1/1. Its function is as follows. Converts heme B (protoheme IX) to heme O by substitution of the vinyl group on carbon 2 of heme B porphyrin ring with a hydroxyethyl farnesyl side group. This is Protoheme IX farnesyltransferase from Salinispora tropica (strain ATCC BAA-916 / DSM 44818 / JCM 13857 / NBRC 105044 / CNB-440).